Consider the following 389-residue polypeptide: Chorismate synthase (389 aa).

Residues R39 and R45 each coordinate NADP(+). FMN-binding positions include 130–132 (RSS), 251–252 (NA), G296, 311–315 (KPIPT), and R338.

Belongs to the chorismate synthase family. Homotetramer. It depends on FMNH2 as a cofactor.

The catalysed reaction is 5-O-(1-carboxyvinyl)-3-phosphoshikimate = chorismate + phosphate. It functions in the pathway metabolic intermediate biosynthesis; chorismate biosynthesis; chorismate from D-erythrose 4-phosphate and phosphoenolpyruvate: step 7/7. Functionally, catalyzes the anti-1,4-elimination of the C-3 phosphate and the C-6 proR hydrogen from 5-enolpyruvylshikimate-3-phosphate (EPSP) to yield chorismate, which is the branch point compound that serves as the starting substrate for the three terminal pathways of aromatic amino acid biosynthesis. This reaction introduces a second double bond into the aromatic ring system. The sequence is that of Chorismate synthase from Oceanobacillus iheyensis (strain DSM 14371 / CIP 107618 / JCM 11309 / KCTC 3954 / HTE831).